We begin with the raw amino-acid sequence, 838 residues long: Ribonuclease Z (838 aa).

The residue at position 824 (Ser824) is a Phosphoserine.

This sequence belongs to the RNase Z family. Homodimer. Zn(2+) serves as cofactor.

The protein localises to the cytoplasm. It localises to the nucleus. It catalyses the reaction Endonucleolytic cleavage of RNA, removing extra 3' nucleotides from tRNA precursor, generating 3' termini of tRNAs. A 3'-hydroxy group is left at the tRNA terminus and a 5'-phosphoryl group is left at the trailer molecule.. Zinc phosphodiesterase, which displays some tRNA 3'-processing endonuclease activity. Probably involved in tRNA maturation, by removing a 3'-trailer from precursor tRNA. The protein is Ribonuclease Z (TRZ1) of Saccharomyces cerevisiae (strain ATCC 204508 / S288c) (Baker's yeast).